The primary structure comprises 197 residues: Prefoldin subunit 3 (197 aa).

Position 2 is an N-acetylalanine (alanine 2). N6-acetyllysine is present on lysine 59.

It belongs to the prefoldin subunit alpha family. In terms of assembly, heterohexamer of two PFD-alpha type and four PFD-beta type subunits. Binds to the C-terminal part of VHL.

The protein resides in the cytoplasm. It localises to the nucleus. Functionally, binds specifically to cytosolic chaperonin (c-CPN) and transfers target proteins to it. Binds to nascent polypeptide chain and promotes folding in an environment in which there are many competing pathways for nonnative proteins. This is Prefoldin subunit 3 (VBP1) from Bos taurus (Bovine).